Consider the following 347-residue polypeptide: uncharacterized protein (347 aa).

Zn(2+) contacts are provided by cysteine 39, histidine 65, cysteine 95, cysteine 98, cysteine 101, cysteine 109, and glutamate 152.

This sequence belongs to the zinc-containing alcohol dehydrogenase family. It depends on Zn(2+) as a cofactor.

This is an uncharacterized protein from Escherichia coli (strain K12).